The following is a 207-amino-acid chain: uncharacterized protein (207 aa).

Catalysis depends on charge relay system residues serine 119 and histidine 160.

This sequence belongs to the peptidase S51 family.

This is an uncharacterized protein from Pasteurella multocida (strain Pm70).